Reading from the N-terminus, the 434-residue chain is UPF0597 protein CLB_1949 (434 aa).

This sequence belongs to the UPF0597 family.

The polypeptide is UPF0597 protein CLB_1949 (Clostridium botulinum (strain ATCC 19397 / Type A)).